The primary structure comprises 124 residues: Small ribosomal subunit protein eS25 (124 aa).

Residues 1–22 show a composition bias toward basic and acidic residues; that stretch reads PPKDDKKKKDAGKSAKKDKDPV. The segment at 1–37 is disordered; that stretch reads PPKDDKKKKDAGKSAKKDKDPVNKSGGKAKKKKWSKG. Residues 27–37 are compositionally biased toward basic residues; it reads GKAKKKKWSKG. N6-acetyllysine is present on K42. Residue K51 is modified to N6-acetyllysine; alternate. K51 bears the N6-succinyllysine; alternate mark. K59 and K65 each carry N6-acetyllysine. Residue K93 is modified to N6-acetyllysine; alternate. K93 carries the N6-succinyllysine; alternate modification.

This sequence belongs to the eukaryotic ribosomal protein eS25 family. In terms of assembly, component of the small ribosomal subunit.

It localises to the cytoplasm. Its function is as follows. Component of the small ribosomal subunit. The ribosome is a large ribonucleoprotein complex responsible for the synthesis of proteins in the cell. This is Small ribosomal subunit protein eS25 (RPS25) from Oryctolagus cuniculus (Rabbit).